We begin with the raw amino-acid sequence, 354 residues long: UPF0324 membrane protein BL1094 (354 aa).

Helical transmembrane passes span 12–33 (IATV…FASW), 43–65 (FGAL…SAYV), 86–108 (LLRL…TQGI), 112–129 (PIAA…YAIA), 138–160 (LAIL…LAGS), 175–197 (VTMA…IALG), 239–256 (LSRV…AIWW), 271–293 (VAFP…VPFV), 300–321 (LVDF…NVNF), and 331–353 (PMLA…AMLF).

The protein belongs to the UPF0324 family.

Its subcellular location is the cell membrane. This is UPF0324 membrane protein BL1094 from Bifidobacterium longum (strain NCC 2705).